A 245-amino-acid chain; its full sequence is Farnesol dehydrogenase (245 aa).

NAD(+)-binding positions include 11-40 (VTGASSGIGAAITTDLAKAGMVVVGLARRV) and D64. Position 145 (S145) interacts with substrate. Residue Y160 is the Proton acceptor of the active site. Residue K164 coordinates NAD(+).

It belongs to the short-chain dehydrogenases/reductases (SDR) family. Homodimer. Highly expressed level in the midgut and brain in adult females, and at lower level in the abdominal and thoracic ganglia. High levels are detected in corpora allata (CA), Malpighian tubules and fat body.

It carries out the reaction (2E,6E)-farnesol + NADP(+) = (2E,6E)-farnesal + NADPH + H(+). Functionally, mediates oxidation of farnesol into farnesal, a precursor of juvenile hormone in the corpora allata (CA), the glands that synthesize juvenile hormone. Able to oxidize C(10) to C(15) isoprenoid and aliphatic alcohols. In Aedes aegypti (Yellowfever mosquito), this protein is Farnesol dehydrogenase.